Consider the following 589-residue polypeptide: Guanylate-binding protein 1 (589 aa).

The tract at residues 1–309 is GTPase domain (Globular); that stretch reads MASEIHMSEP…SAICSGELPC (309 aa). The 242-residue stretch at 35 to 276 folds into the GB1/RHD3-type G domain; the sequence is TQPVVVVAIV…FTSYIFSYSG (242 aa). Residues 47 to 53, 67 to 69, and 97 to 101 contribute to the GTP site; these read YRTGKSY, LGS, and DTEGL. A Phosphoserine modification is found at Ser-156. Cys-586 is modified (cysteine methyl ester). Cys-586 carries S-farnesyl cysteine lipidation. Cys-586 is lipidated: S-geranylgeranyl cysteine; partial. Thr-587 is modified (phosphothreonine). A propeptide spans 587–589 (removed in mature form); that stretch reads TIL.

This sequence belongs to the TRAFAC class dynamin-like GTPase superfamily. GB1/RHD3 GTPase family. GB1 subfamily. As to quaternary structure, homodimer; homodimerization occurs upon GTP-binding and is required for the second hydrolysis step from GDP to GMP. Undergoes conformational changes and oligomerization upon GTP-binding and hydrolysis. Heterodimer with other family members, including GBP2, GBP3, GBP4 and GBP5. Dimerization regulates subcellular location to membranous structures. Interacts with SQSTM1. Interacts (when phosphorylated) with 14-3-3 protein sigma (SFN); leading to GBP1 retention in the cytosol and inactivation. Post-translationally, isoprenylation of mouse GBP1 is incomplete. It persistently exists in the cell as a mixture of C20-modified and (more predominantly) unmodified form. Isoprenylation is required for proper subcellular location. Phosphorylated at Ser-156 by PIM1 in absence of infection, inhibits GBP1: phosphorylation promotes interaction with 14-3-3 protein sigma (SFN), leading to GBP1 retention in the cytosol. Dephosphorylated in response to infection, liberating GBP1.

It is found in the cytoplasmic vesicle membrane. The protein resides in the golgi apparatus membrane. The protein localises to the cell membrane. Its subcellular location is the cytoplasm. It localises to the cytosol. It is found in the secreted. The catalysed reaction is GTP + H2O = GDP + phosphate + H(+). It carries out the reaction GDP + H2O = GMP + phosphate + H(+). Interferon (IFN)-inducible GTPase that plays important roles in innate immunity against a diverse range of bacterial, viral and protozoan pathogens. Hydrolyzes GTP to GMP in two consecutive cleavage reactions: GTP is first hydrolyzed to GDP and then to GMP in a processive manner. Following infection, recruited to the pathogen-containing vacuoles or vacuole-escaped bacteria and promotes both inflammasome assembly and autophagy. Acts as a positive regulator of inflammasome assembly by facilitating the detection of inflammasome ligands from pathogens. Involved in the lysis of pathogen-containing vacuoles, releasing pathogens into the cytosol. Following pathogen release in the cytosol, forms a protein coat in a GTPase-dependent manner that encapsulates pathogens and promotes the detection of ligands by pattern recognition receptors. Plays a key role in inflammasome assembly in response to infection by Gram-negative bacteria: following pathogen release in the cytosol, forms a protein coat that encapsulates Gram-negative bacteria and directly binds to lipopolysaccharide (LPS), disrupting the O-antigen barrier and unmasking lipid A that is that detected by the non-canonical inflammasome effector CASP4/CASP11. Also promotes recruitment of proteins that mediate bacterial cytolysis, leading to release double-stranded DNA (dsDNA) that activates the AIM2 inflammasome. Involved in autophagy by regulating bacteriolytic peptide generation via its interaction with ubiquitin-binding protein SQSTM1, which delivers monoubiquitinated proteins to autolysosomes for the generation of bacteriolytic peptides. Confers protection to several pathogens, including the bacterial pathogens L.monocytogenes and M.bovis BCG as well as the protozoan pathogen T.gondii. Exhibits antiviral activity against influenza virus. The protein is Guanylate-binding protein 1 (Gbp1) of Mus musculus (Mouse).